An 838-amino-acid polypeptide reads, in one-letter code: G-protein coupled receptor-associated sorting protein 2 (838 aa).

Disordered regions lie at residues 1–122 (MTGA…GARP), 218–292 (ASNE…SNPF), 349–368 (RFRH…RAQK), and 531–552 (LELS…PSPE). The segment covering 13 to 31 (KPEKKAGEEVIAGPEREND) has biased composition (basic and acidic residues). Residues 220 to 245 (NESGFWSADETSTASSFWTGEETSVR) show a composition bias toward polar residues. Residues 255-271 (RSRHRAKHQTNPRSRPR) show a composition bias toward basic residues. Residues S282 and S284 each carry the phosphoserine modification. Residues 542-552 (SLLQPDQPSPE) are compositionally biased toward polar residues.

Belongs to the GPRASP family. Interacts with cytoplasmic tails of a variety of G-protein coupled receptors such as muscarinic acetylcholine receptor M1/CHRM1 and calcitonin receptor/CALCR. In terms of tissue distribution, expressed in the brain.

Functionally, may play a role in regulation of a variety of G-protein coupled receptors. This chain is G-protein coupled receptor-associated sorting protein 2 (GPRASP2), found in Homo sapiens (Human).